The following is a 232-amino-acid chain: UPF0758 protein Clos_1766 (232 aa).

One can recognise an MPN domain in the interval 110-232; that stretch reads KIKGPDDVSN…YFSMKEHKLI (123 aa). Residues histidine 181, histidine 183, and aspartate 194 each contribute to the Zn(2+) site. A JAMM motif motif is present at residues 181-194; sequence HNHPSGDPNPSGED.

This sequence belongs to the UPF0758 family.

The chain is UPF0758 protein Clos_1766 from Alkaliphilus oremlandii (strain OhILAs) (Clostridium oremlandii (strain OhILAs)).